The sequence spans 942 residues: UvrABC system protein A (942 aa).

32 to 39 (GLSGSGKS) is an ATP binding site. A C4-type zinc finger spans residues 251-278 (CPVCGFTVPELEPRLFSFNAPFGSCPTC). 2 ABC transporter domains span residues 308–589 (WNPI…KKSI) and 609–937 (GNGR…HYLK). 641–648 (GVSGSGKS) serves as a coordination point for ATP. The C4-type zinc finger occupies 740–766 (CEACSGDGIIKIEMHFLPDVYVPCEVC).

This sequence belongs to the ABC transporter superfamily. UvrA family. As to quaternary structure, forms a heterotetramer with UvrB during the search for lesions.

Its subcellular location is the cytoplasm. Its function is as follows. The UvrABC repair system catalyzes the recognition and processing of DNA lesions. UvrA is an ATPase and a DNA-binding protein. A damage recognition complex composed of 2 UvrA and 2 UvrB subunits scans DNA for abnormalities. When the presence of a lesion has been verified by UvrB, the UvrA molecules dissociate. In Streptococcus pyogenes serotype M6 (strain ATCC BAA-946 / MGAS10394), this protein is UvrABC system protein A.